The following is a 172-amino-acid chain: Small ribosomal subunit protein uS5 (172 aa).

The S5 DRBM domain maps to 17–80; the sequence is LREKMIAVNR…EEARRNMVKV (64 aa).

The protein belongs to the universal ribosomal protein uS5 family. As to quaternary structure, part of the 30S ribosomal subunit. Contacts proteins S4 and S8.

Its function is as follows. With S4 and S12 plays an important role in translational accuracy. In terms of biological role, located at the back of the 30S subunit body where it stabilizes the conformation of the head with respect to the body. In Verminephrobacter eiseniae (strain EF01-2), this protein is Small ribosomal subunit protein uS5.